Here is a 524-residue protein sequence, read N- to C-terminus: Putative mediator of RNA polymerase II transcription subunit 8 (524 aa).

Coiled coils occupy residues 117 to 146 (LKLHIKSFNDRIDKVDQEFENKIQQISKHK) and 175 to 211 (NAQQQLAQQQQQQATINALQQQQRLLNAQQQQQQQQQ). 3 disordered regions span residues 312 to 340 (VASPQQQVTSKQVPIQSTNKPLPQQQPSI), 356 to 379 (LPNTTSPPVNNNNQSPINSGIGGG), and 430 to 451 (QQNQQNQQNQQNQQIHQHIQHL). Over residues 314-333 (SPQQQVTSKQVPIQSTNKPL) the composition is skewed to polar residues. Residues 356–374 (LPNTTSPPVNNNNQSPINS) show a composition bias toward low complexity. A coiled-coil region spans residues 398–478 (IQQQIQLQQQ…LQQQFQQQQL (81 aa)).

It belongs to the Mediator complex subunit 8 family. In terms of assembly, component of the Mediator complex. May be part of a multisubunit E3 ubiquitin-protein ligase complex.

The protein localises to the nucleus. The protein operates within protein modification; protein ubiquitination. In terms of biological role, component of the Mediator complex, a coactivator involved in the regulated transcription of nearly all RNA polymerase II-dependent genes. Mediator functions as a bridge to convey information from gene-specific regulatory proteins to the basal RNA polymerase II transcription machinery. Mediator is recruited to promoters by direct interactions with regulatory proteins and serves as a scaffold for the assembly of a functional preinitiation complex with RNA polymerase II and the general transcription factors. May play a role as a target recruitment subunit in E3 ubiquitin-protein ligase complexes and thus in ubiquitination and subsequent proteasomal degradation of target proteins. The sequence is that of Putative mediator of RNA polymerase II transcription subunit 8 (med8) from Dictyostelium discoideum (Social amoeba).